The sequence spans 171 residues: UPF0312 protein MW2606 (171 aa).

This sequence belongs to the UPF0312 family.

The sequence is that of UPF0312 protein MW2606 from Staphylococcus aureus (strain MW2).